Consider the following 612-residue polypeptide: Dihydroxy-acid dehydratase (612 aa).

A Mg(2+)-binding site is contributed by D81. C122 provides a ligand contact to [2Fe-2S] cluster. Residues D123 and K124 each coordinate Mg(2+). K124 carries the N6-carboxylysine modification. Residue C193 participates in [2Fe-2S] cluster binding. E489 is a Mg(2+) binding site. S515 serves as the catalytic Proton acceptor.

This sequence belongs to the IlvD/Edd family. As to quaternary structure, homodimer. It depends on [2Fe-2S] cluster as a cofactor. Mg(2+) is required as a cofactor.

The catalysed reaction is (2R)-2,3-dihydroxy-3-methylbutanoate = 3-methyl-2-oxobutanoate + H2O. It catalyses the reaction (2R,3R)-2,3-dihydroxy-3-methylpentanoate = (S)-3-methyl-2-oxopentanoate + H2O. Its pathway is amino-acid biosynthesis; L-isoleucine biosynthesis; L-isoleucine from 2-oxobutanoate: step 3/4. The protein operates within amino-acid biosynthesis; L-valine biosynthesis; L-valine from pyruvate: step 3/4. Functions in the biosynthesis of branched-chain amino acids. Catalyzes the dehydration of (2R,3R)-2,3-dihydroxy-3-methylpentanoate (2,3-dihydroxy-3-methylvalerate) into 2-oxo-3-methylpentanoate (2-oxo-3-methylvalerate) and of (2R)-2,3-dihydroxy-3-methylbutanoate (2,3-dihydroxyisovalerate) into 2-oxo-3-methylbutanoate (2-oxoisovalerate), the penultimate precursor to L-isoleucine and L-valine, respectively. The polypeptide is Dihydroxy-acid dehydratase (Stenotrophomonas maltophilia (strain R551-3)).